The primary structure comprises 82 residues: Vejovine (82 aa).

Positions 1-22 are cleaved as a signal peptide; it reads MNAKTLFVVFLIGMLVTEQVEA. The propeptide occupies 70 to 82; the sequence is MTLDEIVDAMYYD.

The protein belongs to the non-disulfide-bridged peptide (NDBP) superfamily. Long chain multifunctional peptide (group 2) family. Expressed by the venom gland.

Its subcellular location is the secreted. It localises to the target cell membrane. Displays significant potent antimicrobial activity against clinical isolates of Gram-negative multidrug resistant strains of E.coli, P.aeruginosa and A.baumanii with MIC values as low as 4.4 uM. Additionally, it displays low cytolytic and hemolytic activity against human erythrocytes reaching 50% hemolysis at 100 uM. The chain is Vejovine from Vaejovis mexicanus (Mexican scorpion).